Consider the following 2073-residue polypeptide: Non-reducing polyketide synthase cla3 (2073 aa).

The segment at 9-242 is N-terminal acylcarrier protein transacylase domain (SAT); the sequence is LLFGDYTEPW…EKLNIHALQH (234 aa). One can recognise a Ketosynthase family 3 (KS3) domain in the interval 363 to 793; that stretch reads SGRIAIVGMS…GGNGCLLLEE (431 aa). Residues C538, H673, and H712 each act as for beta-ketoacyl synthase activity in the active site. A malonyl-CoA:ACP transacylase (MAT) domain region spans residues 898–1198; that stretch reads TFTGQGSQYA…KIMSTLDATG (301 aa). Catalysis depends on S987, which acts as the For acyl/malonyl transferase activity. Residues 1276 to 1590 form a product template (PT) domain region; the sequence is STCAQYVITE…QNVILERLLG (315 aa). The segment at 1279 to 1420 is N-terminal hotdog fold; the sequence is AQYVITETKT…AGLESQWEKS (142 aa). The 308-residue stretch at 1279–1586 folds into the PKS/mFAS DH domain; the sequence is AQYVITETKT…FHRVQNVILE (308 aa). H1311 functions as the Proton acceptor; for dehydratase activity in the catalytic mechanism. Residues 1439–1586 are C-terminal hotdog fold; sequence QGHRIQRDIY…FHRVQNVILE (148 aa). D1500 functions as the Proton donor; for dehydratase activity in the catalytic mechanism. The interval 1594–1637 is disordered; the sequence is SSSVPAQASDPLRSKRSPQEARSLPGEAKTEKPGSTIATTSPVL. Residues 1641-1718 form the Carrier domain; the sequence is KSEQGMFQAL…NLRCAFDEDV (78 aa). Residue S1678 is modified to O-(pantetheine 4'-phosphoryl)serine. Residues 1721 to 1738 are compositionally biased toward polar residues; sequence EFTDSEVTSGTPNSSESV. A disordered region spans residues 1721-1786; it reads EFTDSEVTSG…GVLDDGSPQP (66 aa). The span at 1747–1774 shows a compositional bias: basic and acidic residues; that stretch reads PEEHAFKEPKDDSPLARRDMDNSNDRSL. The thioesterase (TE) domain stretch occupies residues 1805 to 1950; the sequence is FLIADGSGSI…MQQHLRAIFK (146 aa). H2058 acts as the For thioesterase activity in catalysis.

It participates in secondary metabolite biosynthesis. Its function is as follows. Highly reducing polyketide synthase; part of the gene cluster that mediates the biosynthesis of cladosporin, a tricyclic octaketide that acts as an antimalarial agent though inhibition of the Plasmodium falciparum lysyl-tRNA synthetase. The highly reducing polyketide synthase cla2 is responsible for biosynthesis up to the pentaketide stage, including of the tetrahydropyran (THP) ring, whereas the three subsequent ketide extensions with no reduction are catalyzed by the non-reducing polyketide synthase cla3. The protein is Non-reducing polyketide synthase cla3 of Cladosporium cladosporioides.